A 324-amino-acid chain; its full sequence is NADH-dependent D-xylose reductase (324 aa).

The active-site Proton donor is the Tyr-54. His-116 provides a ligand contact to substrate. 220–286 (SSFGPQSFLE…SNSPDRMAQN (67 aa)) lines the NAD(+) pocket.

It belongs to the aldo/keto reductase family.

It carries out the reaction xylitol + NAD(+) = D-xylose + NADH + H(+). The catalysed reaction is xylitol + NADP(+) = D-xylose + NADPH + H(+). Its pathway is carbohydrate metabolism; D-xylose degradation. Reduces D-xylose into xylitol. Preferentially utilizes NADH as a cosubstrate. The sequence is that of NADH-dependent D-xylose reductase (XYL1) from Candida parapsilosis (Yeast).